Consider the following 143-residue polypeptide: Brain ribonuclease (143 aa).

Residues 1-21 form a disordered region; it reads KESAAAKFRRQHMDSGSSSSG. Lys7 and Arg10 together coordinate substrate. His12 (proton acceptor) is an active-site residue. 4 disulfide bridges follow: Cys26-Cys84, Cys40-Cys95, Cys58-Cys110, and Cys65-Cys72. 41 to 45 provides a ligand contact to substrate; that stretch reads KPVNT. N-linked (GlcNAc...) asparagine glycosylation occurs at Asn62. Substrate-binding residues include Lys66 and Arg85. His119 acts as the Proton donor in catalysis. Thr129 carries an O-linked (GalNAc...) threonine glycan. An O-linked (GalNAc...) serine glycan is attached at Ser133.

Belongs to the pancreatic ribonuclease family.

It localises to the secreted. The polypeptide is Brain ribonuclease (BRN) (Ovis aries (Sheep)).